The sequence spans 364 residues: Methylthioribose-1-phosphate isomerase (364 aa).

D254 acts as the Proton donor in catalysis.

Belongs to the eIF-2B alpha/beta/delta subunits family. MtnA subfamily.

Its subcellular location is the cytoplasm. It localises to the nucleus. The catalysed reaction is 5-(methylsulfanyl)-alpha-D-ribose 1-phosphate = 5-(methylsulfanyl)-D-ribulose 1-phosphate. It functions in the pathway amino-acid biosynthesis; L-methionine biosynthesis via salvage pathway; L-methionine from S-methyl-5-thio-alpha-D-ribose 1-phosphate: step 1/6. Functionally, catalyzes the interconversion of methylthioribose-1-phosphate (MTR-1-P) into methylthioribulose-1-phosphate (MTRu-1-P). This is Methylthioribose-1-phosphate isomerase from Drosophila melanogaster (Fruit fly).